A 430-amino-acid chain; its full sequence is tRNA(Ile)-lysidine synthase (430 aa).

21–26 (SGGLDS) is a binding site for ATP.

The protein belongs to the tRNA(Ile)-lysidine synthase family.

It localises to the cytoplasm. The catalysed reaction is cytidine(34) in tRNA(Ile2) + L-lysine + ATP = lysidine(34) in tRNA(Ile2) + AMP + diphosphate + H(+). In terms of biological role, ligates lysine onto the cytidine present at position 34 of the AUA codon-specific tRNA(Ile) that contains the anticodon CAU, in an ATP-dependent manner. Cytidine is converted to lysidine, thus changing the amino acid specificity of the tRNA from methionine to isoleucine. This Salmonella heidelberg (strain SL476) protein is tRNA(Ile)-lysidine synthase.